The following is a 217-amino-acid chain: Thiamine-phosphate synthase (217 aa).

4-amino-2-methyl-5-(diphosphooxymethyl)pyrimidine-binding positions include 39–43 (QYRDK) and Asn-71. The Mg(2+) site is built by Asp-72 and Asp-91. Thr-110 serves as a coordination point for 4-amino-2-methyl-5-(diphosphooxymethyl)pyrimidine. 137 to 139 (SNT) lines the 2-[(2R,5Z)-2-carboxy-4-methylthiazol-5(2H)-ylidene]ethyl phosphate pocket. A 4-amino-2-methyl-5-(diphosphooxymethyl)pyrimidine-binding site is contributed by Lys-140. Gly-167 provides a ligand contact to 2-[(2R,5Z)-2-carboxy-4-methylthiazol-5(2H)-ylidene]ethyl phosphate.

Belongs to the thiamine-phosphate synthase family. Mg(2+) is required as a cofactor.

It carries out the reaction 2-[(2R,5Z)-2-carboxy-4-methylthiazol-5(2H)-ylidene]ethyl phosphate + 4-amino-2-methyl-5-(diphosphooxymethyl)pyrimidine + 2 H(+) = thiamine phosphate + CO2 + diphosphate. The enzyme catalyses 2-(2-carboxy-4-methylthiazol-5-yl)ethyl phosphate + 4-amino-2-methyl-5-(diphosphooxymethyl)pyrimidine + 2 H(+) = thiamine phosphate + CO2 + diphosphate. It catalyses the reaction 4-methyl-5-(2-phosphooxyethyl)-thiazole + 4-amino-2-methyl-5-(diphosphooxymethyl)pyrimidine + H(+) = thiamine phosphate + diphosphate. The protein operates within cofactor biosynthesis; thiamine diphosphate biosynthesis; thiamine phosphate from 4-amino-2-methyl-5-diphosphomethylpyrimidine and 4-methyl-5-(2-phosphoethyl)-thiazole: step 1/1. In terms of biological role, condenses 4-methyl-5-(beta-hydroxyethyl)thiazole monophosphate (THZ-P) and 2-methyl-4-amino-5-hydroxymethyl pyrimidine pyrophosphate (HMP-PP) to form thiamine monophosphate (TMP). The chain is Thiamine-phosphate synthase from Saccharophagus degradans (strain 2-40 / ATCC 43961 / DSM 17024).